Reading from the N-terminus, the 664-residue chain is MASSDALLPISAREEEPLCPYTRLPMADPNQETHGPRRRRPFKGLLAVSFGLLFIAFYVALIATHDGSRSNDEGIDETETITSRARLAGVSEKRNDGLWKLSGDRNTPAFEWNNSMLSWQRTAFHFQPEQNWMNDPNGPLFYKGWYHFFYQYNPNAAVWGDIVWGHAVSRDLIHWVHLPIAMVADQWYDSNGVWTGSATFLPDGSIVMLYTGSTDKAVQVQNLAYPEDPNDPLLLKWVKFPGNPVLVPPPGILPKDFRDPTTAWKTSEGKWRITIGSKLNKTGISLVYDTIDFKTYEKLDTLLHRVPNTGMWECVDFYPVSKTAGNGLDTSVNGPDVKHIVKASMDDTRFDHYAVGTYFDSNGTWIPDDPTIDVGMTASLRYDYGKFYASKSFYDQNKGRRVLWSWIGESDSEASDVQKGWSSLQGIPRTVVLDTKTGKNLVQWPVEEIKSLRLSSKQFDLEVGPGSVVPVDVGSAAQLDIEAEFEINKESLDKIIGNASVVAEAEEFSCEKSGGSTVRGALGPFGFSVLATESLSEQTPVYFYVAKGKDSELKTFFCTDTSRSSVANDVVKPIYGSVVPVLKGEKLTMRILVDHSIVEAFGQGGRTCITSRVYPTTAIYGAAKLFLFNNALDATVTASFTVWQMNSAFIHPYSDEAVRALSRT.

Residues 1-43 (MASSDALLPISAREEEPLCPYTRLPMADPNQETHGPRRRRPFK) are Cytoplasmic-facing. The propeptide at 1 to 108 (MASSDALLPI…WKLSGDRNTP (108 aa)) is removed in mature form. 2 consecutive short sequence motifs (critical for endoplasmic reticulum export) follow at residues 7 to 8 (LL) and 9 to 10 (PI). Residues 14–16 (EEE) carry the Critical for trafficking from the trans-Golgi network to the prevacuolar compartment and from the prevacuolar compartment to the central vacuole motif. The chain crosses the membrane as a helical; Signal-anchor for type II membrane protein span at residues 44–64 (GLLAVSFGLLFIAFYVALIAT). The Lumenal segment spans residues 65 to 664 (HDGSRSNDEG…DEAVRALSRT (600 aa)). Asparagine 113 carries N-linked (GlcNAc...) asparagine glycosylation. Residues 132–135 (WMND), glutamine 151, tryptophan 159, 194–195 (WT), and 258–259 (RD) contribute to the substrate site. Aspartate 135 is an active-site residue. N-linked (GlcNAc...) (complex) asparagine glycosylation occurs at asparagine 280. Substrate is bound by residues glutamate 313 and aspartate 346. Asparagine 362 and asparagine 498 each carry an N-linked (GlcNAc...) asparagine glycan. A disulfide bridge links cysteine 510 with cysteine 558.

It belongs to the glycosyl hydrolase 32 family. In terms of assembly, may be present in two forms, a 70 kDa monomer and a heterodimer of the 30 kDa and 38 kDa subunits. The ratio of the levels of the two forms within cells appears to be regulated developmentally. In terms of tissue distribution, mostly expressed in stems, roots and flowers, and, to a lower extent, in mature leaves.

It is found in the vacuole. It localises to the endoplasmic reticulum membrane. The protein resides in the golgi apparatus membrane. Its subcellular location is the golgi apparatus. The protein localises to the trans-Golgi network membrane. It is found in the prevacuolar compartment membrane. It localises to the vacuole membrane. The protein resides in the vacuole lumen. It carries out the reaction Hydrolysis of terminal non-reducing beta-D-fructofuranoside residues in beta-D-fructofuranosides.. It participates in glycan biosynthesis; sucrose metabolism. Its activity is regulated as follows. Inhibited by C/VIF1 and C/VIF2. Possible role in the continued mobilization of sucrose to sink organs. Regulates root elongation. The protein is Acid beta-fructofuranosidase 4, vacuolar of Arabidopsis thaliana (Mouse-ear cress).